Here is a 781-residue protein sequence, read N- to C-terminus: Putative UPF0313 protein YPO0674/y3502/YP_2990 (781 aa).

The region spanning 368–646 is the Radical SAM core domain; it reads AYDMIRFSIN…KALLRYHDPA (279 aa). [4Fe-4S] cluster is bound by residues cysteine 382, cysteine 386, and cysteine 389. A disordered region spans residues 681–781; sequence REARRALRHH…AGSRGKNRQH (101 aa). The span at 696–708 shows a compositional bias: polar residues; that stretch reads KHTSITRQRQPSN. Over residues 726–750 the composition is skewed to low complexity; sequence TSSAHSTSANQSTSANQSTSAAHST.

It belongs to the UPF0313 family. Requires [4Fe-4S] cluster as cofactor.

This chain is Putative UPF0313 protein YPO0674/y3502/YP_2990, found in Yersinia pestis.